Reading from the N-terminus, the 988-residue chain is Protein argonaute 10 (988 aa).

The segment covering 1–11 (MPIRQMKDSSE) has biased composition (basic and acidic residues). A disordered region spans residues 1-103 (MPIRQMKDSS…PPSQTTSSAV (103 aa)). Low complexity predominate over residues 41 to 57 (PVTVTTPATVTQSQASS). Basic residues predominate over residues 64-73 (NRSRRRNRGG). In terms of domain architecture, PAZ spans 338 to 451 (PVIEFVAQLL…LPMEACKIVE (114 aa)). Positions 625–946 (LLLAILPDNN…AAFRARFYLE (322 aa)) constitute a Piwi domain.

This sequence belongs to the argonaute family. Ago subfamily. Interacts with GATA18/HAN and KNAT1/BP. Interacts with RICE1 and RICE2 that act as cofactors. In terms of tissue distribution, expressed in roots, stems, leaves, developing embryo, siliques, inflorescences, provascular tissue, shoot apical meristem (SAM) and adaxial (upper) sides of lateral organ primordia. Observed in the floral meristem, the adaxial side of sepal primordia, and the provascular tissue.

It is found in the cytoplasm. In terms of biological role, involved in RNA-mediated post-transcriptional gene silencing (PTGS). Main component of the RNA-induced silencing complex (RISC) that binds to a short guide RNA such as a microRNA (miRNA) or small interfering RNA (siRNA). RISC uses the mature miRNA or siRNA as a guide for slicer-directed cleavage of homologous mRNAs to repress gene expression. Required for reliable formation of primary and axillary shoot apical meristems. Specifies leaf adaxial identity by repressing the miR165 and miR166 microRNAs in the embryonic shoot apex, in the shoot apical meristem (SAM) and leaf. Represses the microRNA miR398 which targets CCS1 chaperone mRNAs for translational inhibition. Acts as a negative regulator of AGO1 protein level. Like AGO1, is required for stem cell function and organ polarity. Unlike AGO1, is not subjected to small RNA-mediated repression itself. Essential for multiple processes in development. Coregulates, with GATA18/HAN, the shoot apical meristem (SAM) organization. The polypeptide is Protein argonaute 10 (Arabidopsis thaliana (Mouse-ear cress)).